Here is a 188-residue protein sequence, read N- to C-terminus: GTP cyclohydrolase 1 (188 aa).

Residues Cys-76, His-79, and Cys-148 each coordinate Zn(2+).

This sequence belongs to the GTP cyclohydrolase I family. Homomer.

The catalysed reaction is GTP + H2O = 7,8-dihydroneopterin 3'-triphosphate + formate + H(+). It functions in the pathway cofactor biosynthesis; 7,8-dihydroneopterin triphosphate biosynthesis; 7,8-dihydroneopterin triphosphate from GTP: step 1/1. The polypeptide is GTP cyclohydrolase 1 (Thermoanaerobacter pseudethanolicus (strain ATCC 33223 / 39E) (Clostridium thermohydrosulfuricum)).